The sequence spans 153 residues: MRVYEGKLISKGQKFGIIVGRFNEFIGGKLLSGAIDALKRHGVDEENIEIAWVPGAFEMPLIAKKMAKSQKYDGVICLGAVIRGATPHFDYVSSEVTKGVASVSLETEVPVIFGVLTTDTIEQAIERAGTKAGNKGFEAAVTAIEMANLLKEF.

5-amino-6-(D-ribitylamino)uracil contacts are provided by residues phenylalanine 22, 56–58, and 80–82; these read AFE and AVI. (2S)-2-hydroxy-3-oxobutyl phosphate is bound at residue 85–86; that stretch reads AT. The active-site Proton donor is histidine 88. Phenylalanine 113 contributes to the 5-amino-6-(D-ribitylamino)uracil binding site. Arginine 127 contributes to the (2S)-2-hydroxy-3-oxobutyl phosphate binding site.

The protein belongs to the DMRL synthase family.

The enzyme catalyses (2S)-2-hydroxy-3-oxobutyl phosphate + 5-amino-6-(D-ribitylamino)uracil = 6,7-dimethyl-8-(1-D-ribityl)lumazine + phosphate + 2 H2O + H(+). It participates in cofactor biosynthesis; riboflavin biosynthesis; riboflavin from 2-hydroxy-3-oxobutyl phosphate and 5-amino-6-(D-ribitylamino)uracil: step 1/2. In terms of biological role, catalyzes the formation of 6,7-dimethyl-8-ribityllumazine by condensation of 5-amino-6-(D-ribitylamino)uracil with 3,4-dihydroxy-2-butanone 4-phosphate. This is the penultimate step in the biosynthesis of riboflavin. The polypeptide is 6,7-dimethyl-8-ribityllumazine synthase (Alkaliphilus metalliredigens (strain QYMF)).